A 486-amino-acid polypeptide reads, in one-letter code: Membrane-bound lytic murein transglycosylase F (486 aa).

Residues 1 to 21 form the signal peptide; that stretch reads MKRLKINYILIGVVTLLLALA. The interval 22–268 is non-LT domain; sequence LWPNITWRGG…RLEEKYLGHV (247 aa). Residues 269–486 are LT domain; the sequence is GSFDYVDTKT…AVTPELALNF (218 aa). Residue Glu-313 is part of the active site.

The protein in the N-terminal section; belongs to the bacterial solute-binding protein 3 family. It in the C-terminal section; belongs to the transglycosylase Slt family.

Its subcellular location is the cell outer membrane. It carries out the reaction Exolytic cleavage of the (1-&gt;4)-beta-glycosidic linkage between N-acetylmuramic acid (MurNAc) and N-acetylglucosamine (GlcNAc) residues in peptidoglycan, from either the reducing or the non-reducing ends of the peptidoglycan chains, with concomitant formation of a 1,6-anhydrobond in the MurNAc residue.. Murein-degrading enzyme that degrades murein glycan strands and insoluble, high-molecular weight murein sacculi, with the concomitant formation of a 1,6-anhydromuramoyl product. Lytic transglycosylases (LTs) play an integral role in the metabolism of the peptidoglycan (PG) sacculus. Their lytic action creates space within the PG sacculus to allow for its expansion as well as for the insertion of various structures such as secretion systems and flagella. In Serratia proteamaculans (strain 568), this protein is Membrane-bound lytic murein transglycosylase F.